The chain runs to 333 residues: Terminal uridylyltransferase 4 (333 aa).

UTP is bound by residues S54 and 65 to 68 (SDVD). Mg(2+) is bound by residues D66 and D68. R121 contacts RNA. Residues 144–148 (GVRNS), K169, K173, and 188–189 (SY) contribute to the UTP site. The 66-residue stretch at 237 to 302 (LGTQVLDFLH…WCIEDPYELN (66 aa)) folds into the PAP-associated domain.

Belongs to the DNA polymerase type-B-like family. As to quaternary structure, monomer. Mg(2+) serves as cofactor. It depends on Mn(2+) as a cofactor.

The enzyme catalyses RNA(n) + UTP = RNA(n)-3'-uridine ribonucleotide + diphosphate. The 3' uridylated RNA substrate is involved in the selective incorporation of UTP; UTP binding is favored due to the constraint posed on the positioning of the NTP base by the continuous stacking interactions between Tyr-189 side chain, the bound NTP, and the terminal nucleoside base of the RNA substrate. Functionally, terminal uridylyltransferase which, specifically, catalyzes the addition of Us to the 3'-hydroxyl group of single-stranded RNAs with a 3'-terminal U. The protein is Terminal uridylyltransferase 4 of Trypanosoma brucei brucei (strain 927/4 GUTat10.1).